The sequence spans 176 residues: Interleukin-1 receptor antagonist protein (176 aa).

The signal sequence occupies residues 1 to 25 (METCRCPLSYLISFLLFLSHSETAC). Cysteines 91 and 141 form a disulfide. A glycan (N-linked (GlcNAc...) asparagine) is linked at N109.

Belongs to the IL-1 family.

It localises to the secreted. Functionally, anti-inflammatory antagonist of interleukin-1 family of proinflammatory cytokines such as interleukin-1beta/IL1B and interleukin-1alpha/IL1A. Protects from immune dysregulation and uncontrolled systemic inflammation triggered by IL1 for a range of innate stimulatory agents such as pathogens. The polypeptide is Interleukin-1 receptor antagonist protein (IL1RN) (Canis lupus familiaris (Dog)).